Consider the following 660-residue polypeptide: Baseplate wedge protein gp6 (660 aa).

This sequence belongs to the T4likevirus baseplate wedge protein gp6 family. In terms of assembly, homodimer; each gp6 molecule in the ring interacts with its two neighbors, forming an N-terminal dimer with one and a C-terminal dimer with the other. Heterotrimer with gp7; gp6 is part of a (gp6)2-gp7 heterotrimeric molecule. The (gp6)2-gp7 heterotrimeric molecule further interacts with gp25 and gp53; the gp25-(gp6)2-gp7 module is involved in sheath contraction. Part of the baseplate macromolecular complex which consists of gp5, gp5.4, gp27 (central spike complex); gp6, gp25, gp53 (inner baseplate); gp7, gp8 (intermediate baseplate); gp9, gp10, gp11, gp12 (peripheral); gp48 and gp54 (proximal region of the tail tube).

The protein localises to the virion. In terms of biological role, baseplate protein that is located next to the tail tube (inner baseplate). Involved in the tail assembly. The gp25-(gp6)2-gp7 module is involved in sheath contraction. The polypeptide is Baseplate wedge protein gp6 (6) (Escherichia coli (Bacteriophage T4)).